Consider the following 226-residue polypeptide: dITP/XTP pyrophosphatase (226 aa).

Substrate is bound at residue 14–19 (TGNKDK). Positions 49 and 83 each coordinate Mg(2+). Asp-83 serves as the catalytic Proton acceptor. Residues Thr-84, 176 to 179 (FGYD), Lys-199, and 204 to 205 (HR) each bind substrate.

This sequence belongs to the HAM1 NTPase family. In terms of assembly, homodimer. Requires Mg(2+) as cofactor.

It catalyses the reaction XTP + H2O = XMP + diphosphate + H(+). It carries out the reaction dITP + H2O = dIMP + diphosphate + H(+). The catalysed reaction is ITP + H2O = IMP + diphosphate + H(+). Its function is as follows. Pyrophosphatase that catalyzes the hydrolysis of nucleoside triphosphates to their monophosphate derivatives, with a high preference for the non-canonical purine nucleotides XTP (xanthosine triphosphate), dITP (deoxyinosine triphosphate) and ITP. Seems to function as a house-cleaning enzyme that removes non-canonical purine nucleotides from the nucleotide pool, thus preventing their incorporation into DNA/RNA and avoiding chromosomal lesions. This Chlorobaculum tepidum (strain ATCC 49652 / DSM 12025 / NBRC 103806 / TLS) (Chlorobium tepidum) protein is dITP/XTP pyrophosphatase.